Here is a 626-residue protein sequence, read N- to C-terminus: E3 ubiquitin-protein ligase HRD1 (626 aa).

The signal sequence occupies residues 1-15; sequence MQLLLSSVCMALTSA. Residues 16–38 lie on the Lumenal side of the membrane; the sequence is VIGFAYYQKQQFYPAVVYITKSN. The helical transmembrane segment at 39 to 59 threads the bilayer; the sequence is ASMGVIYIQFFVIVFMFGKLL. Topologically, residues 60 to 96 are cytoplasmic; the sequence is SKIFLGTLRAAEFEHLLERFWYALTETCLAFTVFRDD. A helical membrane pass occupies residues 97-117; sequence FNPRFVALFTVLLFLKSFHWL. Topologically, residues 118 to 128 are lumenal; it reads AEERVDFMERS. The chain crosses the membrane as a helical span at residues 129 to 149; sequence PVLGWLFHIRVGSLLTVLGIL. The Cytoplasmic portion of the chain corresponds to 150 to 167; sequence DYVLLIHAYNSTLVRGPT. Residues 168 to 188 traverse the membrane as a helical segment; the sequence is VQLVFGFEYAILLTVIASTAI. Over 189–222 the chain is Lumenal; that stretch reads KYVLHAAEMRTDTPWENKAVFLLYTELVIGLIKV. A helical transmembrane segment spans residues 223-243; the sequence is VLYILFVVIMAKIYALPMFVF. The interaction with p53/TP53 stretch occupies residues 234 to 268; that stretch reads KIYALPMFVFRPMFFTIRNFRKALNDVIMSRRAIR. At 244–626 the chain is on the cytoplasmic side; it reads RPMFFTIRNF…AATNERTTAE (383 aa). The segment at 289-328 adopts an RING-type; atypical zinc-finger fold; sequence CIICREDMVNHSKKLPCGHIFHTTCLRSWFQRQQTCPTCR. The interval 569–600 is disordered; sequence DADEDDIPSTATEAVSIPNSDADFEENSSELG. Residues 577–587 are compositionally biased toward polar residues; the sequence is STATEAVSIPN.

This sequence belongs to the HRD1 family. In terms of assembly, homodimer. Interacts with p53. May interact with Septin2.

Its subcellular location is the endoplasmic reticulum membrane. It catalyses the reaction S-ubiquitinyl-[E2 ubiquitin-conjugating enzyme]-L-cysteine + [acceptor protein]-L-lysine = [E2 ubiquitin-conjugating enzyme]-L-cysteine + N(6)-ubiquitinyl-[acceptor protein]-L-lysine.. The protein operates within protein modification; protein ubiquitination. Acts as an E3 ubiquitin-protein ligase which accepts ubiquitin specifically from endoplasmic reticulum-associated UBC7 E2 ligase and transfers it to substrates, promoting their degradation. Component of the endoplasmic reticulum quality control (ERQC) system also called ER-associated degradation (ERAD) involved in ubiquitin-dependent degradation of misfolded endoplasmic reticulum proteins. Also promotes the degradation of normal but naturally short-lived proteins. Protects cells from ER stress-induced apoptosis. Sequesters p53 in the cytoplasm and promotes its degradation, thereby negatively regulating its biological function in transcription, cell cycle regulation and apoptosis. The sequence is that of E3 ubiquitin-protein ligase HRD1 (sip3) from Drosophila melanogaster (Fruit fly).